The chain runs to 215 residues: Adenylate kinase (215 aa).

10 to 15 (GAGKGT) contributes to the ATP binding site. The NMP stretch occupies residues 30–59 (STGDIFRKNIKEKTELGQKVEGLLAQGKLV). AMP is bound by residues Thr31, Arg36, 57 to 59 (KLV), 85 to 88 (GFPR), and Gln92. Positions 126-163 (GRRVCPSCGASYHIDNNPTKVDGICDACQTPVIQREDD) are LID. Arg127 is an ATP binding site. Residues Cys130 and Cys133 each contribute to the Zn(2+) site. ATP is bound at residue 136 to 137 (SY). Positions 150 and 153 each coordinate Zn(2+). Residues Arg160 and Arg171 each coordinate AMP. Leu199 is a binding site for ATP.

This sequence belongs to the adenylate kinase family. Monomer.

Its subcellular location is the cytoplasm. The catalysed reaction is AMP + ATP = 2 ADP. It participates in purine metabolism; AMP biosynthesis via salvage pathway; AMP from ADP: step 1/1. Functionally, catalyzes the reversible transfer of the terminal phosphate group between ATP and AMP. Plays an important role in cellular energy homeostasis and in adenine nucleotide metabolism. The sequence is that of Adenylate kinase from Finegoldia magna (strain ATCC 29328 / DSM 20472 / WAL 2508) (Peptostreptococcus magnus).